The primary structure comprises 165 residues: Large ribosomal subunit protein uL11 (165 aa).

At S38 the chain carries Phosphoserine. K40 participates in a covalent cross-link: Glycyl lysine isopeptide (Lys-Gly) (interchain with G-Cter in SUMO2). K48 participates in a covalent cross-link: Glycyl lysine isopeptide (Lys-Gly) (interchain with G-Cter in ubiquitin). Residue K54 is modified to N6-acetyllysine. Residue K83 forms a Glycyl lysine isopeptide (Lys-Gly) (interchain with G-Cter in ubiquitin) linkage. S165 carries the phosphoserine modification.

Belongs to the universal ribosomal protein uL11 family. As to quaternary structure, component of the large ribosomal subunit. Mature ribosomes consist of a small (40S) and a large (60S) subunit. The 40S subunit contains about 33 different proteins and 1 molecule of RNA (18S). The 60S subunit contains about 49 different proteins and 3 molecules of RNA (28S, 5.8S and 5S). Ubiquitinated at Lys-48 and Lys-83 by RNF14 and RNF25 in response to ribosome collisions (ribosome stalling).

It localises to the cytoplasm. In terms of biological role, component of the large ribosomal subunit. The ribosome is a large ribonucleoprotein complex responsible for the synthesis of proteins in the cell. Binds directly to 26S ribosomal RNA. In Bos taurus (Bovine), this protein is Large ribosomal subunit protein uL11 (RPL12).